Reading from the N-terminus, the 64-residue chain is Large ribosomal subunit protein uL29 (64 aa).

It belongs to the universal ribosomal protein uL29 family.

This chain is Large ribosomal subunit protein uL29, found in Lacticaseibacillus paracasei (strain ATCC 334 / BCRC 17002 / CCUG 31169 / CIP 107868 / KCTC 3260 / NRRL B-441) (Lactobacillus paracasei).